The sequence spans 486 residues: Surface lipoprotein assembly modifier (486 aa).

The first 29 residues, 1-29 (MKNGVKQISFLSLIGLSLIGLSLTNIAWA), serve as a signal peptide directing secretion. The interval 30–197 (KVARPKNDTL…QYLLTLNQRN (168 aa)) is N-terminal domain. The segment at 198-486 (QWIWQVGLNF…RIYLEIGKIF (289 aa)) is C-terminal probable beta barrel. The next 14 membrane-spanning stretches (beta stranded) occupy residues 199 to 209 (WIWQVGLNFLN), 237 to 248 (GRVFFISRKKWP), 253 to 262 (FFSKTMFNGN), 276 to 286 (TLRIGGGLGYQ), 290 to 300 (VEVSLFPFQEK), 320 to 330 (LGIRLENVDWL), 334 to 344 (WQISTALEYGE), 358 to 367 (YFISSTLFYL), 373 to 382 (FWFVGMDFHR), 395 to 404 (KTLRLGWGQD), 409 to 419 (ISSRLTFSYAN), 437 to 446 (YATTITLWHR), 453 to 463 (LTPKLSWDYQK), and 476 to 486 (NRIYLEIGKIF).

It belongs to the Slam family.

The protein resides in the cell outer membrane. Its function is as follows. Required for correct export to the cell surface of some cell outer membrane lipoproteins (tested with TpbP) upon heterologous expression in E.coli and probably also in Haemophilus. The chain is Surface lipoprotein assembly modifier from Haemophilus influenzae (strain 86-028NP).